A 345-amino-acid chain; its full sequence is UDP-3-O-acylglucosamine N-acyltransferase (345 aa).

Catalysis depends on His-253, which acts as the Proton acceptor.

It belongs to the transferase hexapeptide repeat family. LpxD subfamily. In terms of assembly, homotrimer.

It catalyses the reaction a UDP-3-O-[(3R)-3-hydroxyacyl]-alpha-D-glucosamine + a (3R)-hydroxyacyl-[ACP] = a UDP-2-N,3-O-bis[(3R)-3-hydroxyacyl]-alpha-D-glucosamine + holo-[ACP] + H(+). The protein operates within bacterial outer membrane biogenesis; LPS lipid A biosynthesis. Functionally, catalyzes the N-acylation of UDP-3-O-acylglucosamine using 3-hydroxyacyl-ACP as the acyl donor. Is involved in the biosynthesis of lipid A, a phosphorylated glycolipid that anchors the lipopolysaccharide to the outer membrane of the cell. The protein is UDP-3-O-acylglucosamine N-acyltransferase of Rickettsia massiliae (strain Mtu5).